A 182-amino-acid chain; its full sequence is Adenine phosphoribosyltransferase (182 aa).

133-137 (ATGGS) serves as a coordination point for AMP.

This sequence belongs to the purine/pyrimidine phosphoribosyltransferase family. As to quaternary structure, homodimer. Requires Mg(2+) as cofactor.

The protein localises to the cytoplasm. Its subcellular location is the nucleus. It carries out the reaction AMP + diphosphate = 5-phospho-alpha-D-ribose 1-diphosphate + adenine. It functions in the pathway purine metabolism; AMP biosynthesis via salvage pathway; AMP from adenine: step 1/1. In terms of biological role, catalyzes a salvage reaction resulting in the formation of AMP, that is energically less costly than de novo synthesis. The protein is Adenine phosphoribosyltransferase (APT1) of Yarrowia lipolytica (strain CLIB 122 / E 150) (Yeast).